Here is a 106-residue protein sequence, read N- to C-terminus: Large ribosomal subunit protein cL38 (106 aa).

Residues Met-1–Glu-39 constitute a chloroplast transit peptide. The tract at residues Ser-42–Thr-70 is disordered. A compositionally biased stretch (basic residues) spans Pro-44 to Lys-59.

It belongs to the chloroplast-specific ribosomal protein cL38 family. As to quaternary structure, part of the 50S ribosomal subunit.

It is found in the plastid. It localises to the chloroplast. The protein is Large ribosomal subunit protein cL38 (PSRP6) of Arabidopsis thaliana (Mouse-ear cress).